Here is a 264-residue protein sequence, read N- to C-terminus: DNA-directed RNA polymerase subunit Rpo3 (264 aa).

[3Fe-4S] cluster is bound by residues cysteine 203, cysteine 206, and cysteine 209.

It belongs to the archaeal Rpo3/eukaryotic RPB3 RNA polymerase subunit family. Part of the RNA polymerase complex. The cofactor is [3Fe-4S] cluster.

The protein resides in the cytoplasm. The catalysed reaction is RNA(n) + a ribonucleoside 5'-triphosphate = RNA(n+1) + diphosphate. Functionally, DNA-dependent RNA polymerase (RNAP) catalyzes the transcription of DNA into RNA using the four ribonucleoside triphosphates as substrates. The sequence is that of DNA-directed RNA polymerase subunit Rpo3 from Archaeoglobus fulgidus (strain ATCC 49558 / DSM 4304 / JCM 9628 / NBRC 100126 / VC-16).